A 489-amino-acid polypeptide reads, in one-letter code: Cysteine--tRNA ligase (489 aa).

C29 is a binding site for Zn(2+). The 'HIGH' region signature appears at I31–H41. C209, H234, and E238 together coordinate Zn(2+). Positions K266 to S270 match the 'KMSKS' region motif. K269 provides a ligand contact to ATP.

The protein belongs to the class-I aminoacyl-tRNA synthetase family. Monomer. Requires Zn(2+) as cofactor.

It localises to the cytoplasm. The enzyme catalyses tRNA(Cys) + L-cysteine + ATP = L-cysteinyl-tRNA(Cys) + AMP + diphosphate. The chain is Cysteine--tRNA ligase from Desulfotalea psychrophila (strain LSv54 / DSM 12343).